The following is a 127-amino-acid chain: Class I hydrophobin 1 (127 aa).

An N-terminal signal peptide occupies residues 1–20; sequence MLSLLSKAVSLAILVTAVVA. Disulfide bonds link Cys-53-Cys-108, Cys-60-Cys-102, Cys-61-Cys-94, and Cys-109-Cys-122. Asn-66 carries N-linked (GlcNAc...) asparagine glycosylation.

This sequence belongs to the fungal hydrophobin family. Self-assembles to form functional amyloid fibrils called rodlets. Self-assembly into fibrillar rodlets occurs spontaneously at hydrophobic:hydrophilic interfaces and the rodlets further associate laterally to form amphipathic monolayers. Expressed everywhere in the mycelial tissues of developing fruiting bodies except for the top parts of the pileus (cap) and for the prehymenophore; but high level of the transcript is detected in the parts surrounding the prehymenophore.

The protein localises to the secreted. The protein resides in the cell wall. Aerial growth, conidiation, and dispersal of filamentous fungi in the environment rely upon a capability of their secreting small amphipathic proteins called hydrophobins (HPBs) with low sequence identity. Class I can self-assemble into an outermost layer of rodlet bundles on aerial cell surfaces, conferring cellular hydrophobicity that supports fungal growth, development and dispersal; whereas Class II form highly ordered films at water-air interfaces through intermolecular interactions but contribute nothing to the rodlet structure. Hyd1 is a class I hydrophobin that plays a role in fruiting body initiation rather than in mature fruit body maintenance. Seems to be involved in the formation in the extracellular matrix of lined air channels with a hydrophobic membrane. These channels may help to provide gas exchange during respiration in mycelial tissues of developing fruiting bodies and are formed all over the mycelial tissues of these developing fruiting bodies except for the top parts of the pileus (cap) and for the prehymenophore. This Lentinula edodes (Shiitake mushroom) protein is Class I hydrophobin 1.